A 99-amino-acid polypeptide reads, in one-letter code: Aspartyl/glutamyl-tRNA(Asn/Gln) amidotransferase subunit C (99 aa).

This sequence belongs to the GatC family. In terms of assembly, heterotrimer of A, B and C subunits.

It carries out the reaction L-glutamyl-tRNA(Gln) + L-glutamine + ATP + H2O = L-glutaminyl-tRNA(Gln) + L-glutamate + ADP + phosphate + H(+). The catalysed reaction is L-aspartyl-tRNA(Asn) + L-glutamine + ATP + H2O = L-asparaginyl-tRNA(Asn) + L-glutamate + ADP + phosphate + 2 H(+). Allows the formation of correctly charged Asn-tRNA(Asn) or Gln-tRNA(Gln) through the transamidation of misacylated Asp-tRNA(Asn) or Glu-tRNA(Gln) in organisms which lack either or both of asparaginyl-tRNA or glutaminyl-tRNA synthetases. The reaction takes place in the presence of glutamine and ATP through an activated phospho-Asp-tRNA(Asn) or phospho-Glu-tRNA(Gln). This chain is Aspartyl/glutamyl-tRNA(Asn/Gln) amidotransferase subunit C, found in Solibacter usitatus (strain Ellin6076).